A 105-amino-acid chain; its full sequence is Vacuolar ATPase assembly integral membrane protein VMA21 homolog (105 aa).

Positions 1-26 (MSTKNKKAAGGNGGAPKQTRQQSHDS) are disordered. Topologically, residues 1–36 (MSTKNKKAAGGNGGAPKQTRQQSHDSQDYSSFKTVL) are cytoplasmic. Residues 37-57 (FYCMLIVFLPVLTFFVLKGFV) form a helical membrane-spanning segment. The Lumenal segment spans residues 58–68 (LDQFLDISEVK). A helical transmembrane segment spans residues 69-89 (VNIASAVGAVVALHIALGLYI). Residues 90–105 (YRAYFGTTGSKASKTD) lie on the Cytoplasmic side of the membrane.

Belongs to the VMA21 family.

The protein localises to the endoplasmic reticulum membrane. Its subcellular location is the endoplasmic reticulum-Golgi intermediate compartment membrane. It is found in the cytoplasmic vesicle. It localises to the COPII-coated vesicle membrane. Required for the assembly of the V0 complex of the vacuolar ATPase (V-ATPase) in the endoplasmic reticulum. In Drosophila erecta (Fruit fly), this protein is Vacuolar ATPase assembly integral membrane protein VMA21 homolog.